We begin with the raw amino-acid sequence, 354 residues long: Ornithine transcarbamylase, mitochondrial (354 aa).

The N-terminal 32 residues, 1–32, are a transit peptide targeting the mitochondrion; sequence MLFHLRTLLNNAALRNGHNFVVRNFRCGQPLQ. Lys70 is subject to N6-acetyllysine; alternate. Lys70 is modified (N6-succinyllysine; alternate). The residue at position 80 (Lys80) is an N6-succinyllysine. An N6-acetyllysine; alternate modification is found at Lys88. An N6-succinyllysine; alternate modification is found at Lys88. At Ser133 the chain carries Phosphoserine. Lys144, Lys221, Lys231, and Lys238 each carry N6-acetyllysine; alternate. N6-succinyllysine; alternate occurs at positions 144, 221, 231, and 238. Lys243 carries the N6-acetyllysine modification. The active site involves Asp263. 2 positions are modified to N6-succinyllysine: Lys274 and Lys289. Position 292 is an N6-acetyllysine; alternate (Lys292). Lys292 carries the post-translational modification N6-succinyllysine; alternate. Cys303 is a catalytic residue. Lys307 carries the post-translational modification N6-acetyllysine; alternate. N6-succinyllysine; alternate is present on Lys307.

This sequence belongs to the aspartate/ornithine carbamoyltransferase superfamily. OTCase family. In terms of assembly, homotrimer. In terms of processing, acetylation at Lys-88 negatively regulates ornithine carbamoyltransferase activity in response to nutrient signals.

The protein localises to the mitochondrion matrix. The enzyme catalyses carbamoyl phosphate + L-ornithine = L-citrulline + phosphate + H(+). It participates in nitrogen metabolism; urea cycle; L-citrulline from L-ornithine and carbamoyl phosphate: step 1/1. With respect to regulation, negatively regulated by lysine acetylation. Catalyzes the second step of the urea cycle, the condensation of carbamoyl phosphate with L-ornithine to form L-citrulline. The urea cycle ensures the detoxification of ammonia by converting it to urea for excretion. The protein is Ornithine transcarbamylase, mitochondrial of Bos taurus (Bovine).